The following is a 359-amino-acid chain: Chaperone protein DnaJ (359 aa).

The J domain occupies 3–68 (DYYEILGVPK…ERRQTYDRYG (66 aa)). The CR-type zinc finger occupies 128–205 (GVSKDIKYKI…CAGKGFIEEQ (78 aa)). Positions 141, 144, 157, 160, 179, 182, 193, and 196 each coordinate Zn(2+). CXXCXGXG motif repeat units follow at residues 141-148 (CKTCDGTG), 157-164 (CPYCGGSG), 179-186 (CPFCKGSG), and 193-200 (CHDCAGKG).

Belongs to the DnaJ family. In terms of assembly, homodimer. Zn(2+) serves as cofactor.

It localises to the cytoplasm. Its function is as follows. Participates actively in the response to hyperosmotic and heat shock by preventing the aggregation of stress-denatured proteins and by disaggregating proteins, also in an autonomous, DnaK-independent fashion. Unfolded proteins bind initially to DnaJ; upon interaction with the DnaJ-bound protein, DnaK hydrolyzes its bound ATP, resulting in the formation of a stable complex. GrpE releases ADP from DnaK; ATP binding to DnaK triggers the release of the substrate protein, thus completing the reaction cycle. Several rounds of ATP-dependent interactions between DnaJ, DnaK and GrpE are required for fully efficient folding. Also involved, together with DnaK and GrpE, in the DNA replication of plasmids through activation of initiation proteins. The polypeptide is Chaperone protein DnaJ (Campylobacter hominis (strain ATCC BAA-381 / DSM 21671 / CCUG 45161 / LMG 19568 / NCTC 13146 / CH001A)).